We begin with the raw amino-acid sequence, 102 residues long: Small ribosomal subunit protein uS10 (102 aa).

It belongs to the universal ribosomal protein uS10 family. In terms of assembly, part of the 30S ribosomal subunit.

Functionally, involved in the binding of tRNA to the ribosomes. In Heliobacterium modesticaldum (strain ATCC 51547 / Ice1), this protein is Small ribosomal subunit protein uS10.